Reading from the N-terminus, the 326-residue chain is Vitamin B12 import system permease protein BtuC (326 aa).

Residues 1 to 10 (MLTLARQQQR) are Cytoplasmic-facing. Residues 11–35 (QNIRWLLCLSVLMLLALLLSLCAGE) traverse the membrane as a helical segment. Residues 36–56 (QWISPGDWFSPRGELFVWQIR) lie on the Periplasmic side of the membrane. Residues 57–81 (LPRTLAVLLVGAALAISGAVMQALF) traverse the membrane as a helical segment. The Cytoplasmic segment spans residues 82 to 92 (ENPLAEPGLLG). The helical transmembrane segment at 93–107 (VSNGAGVGLIAAVLL) threads the bilayer. The Periplasmic portion of the chain corresponds to 108–113 (GQGQLP). Residues 114–138 (NWALGLCAIAGALIITLILLRFARR) form a helical membrane-spanning segment. The Cytoplasmic segment spans residues 139–141 (HLS). The helical transmembrane segment at 142–166 (TSRLLLAGVALGIICSALMTWAIYF) threads the bilayer. The Periplasmic portion of the chain corresponds to 167–190 (STSVDLRQLMYWMMGGFGGVDWRQ). Residues 191–206 (SWLMLALIPMLLWICC) form a helical membrane-spanning segment. Residues 207 to 228 (QSRPMNMLALGEISARQLGLPL) lie on the Cytoplasmic side of the membrane. Residues 229–249 (WFWRNVLVAATGWMVGVSVAL) form a helical membrane-spanning segment. The Periplasmic segment spans residues 250-257 (AGAIGFIG). A helical membrane pass occupies residues 258–267 (LVIPHILRLC). Topologically, residues 268–274 (GLTDHRA) are cytoplasmic. The helical transmembrane segment at 275–296 (LLPGCALAGASALLLADIVARL) threads the bilayer. The Periplasmic segment spans residues 297–304 (ALAAAELP). The chain crosses the membrane as a helical span at residues 305 to 324 (IGVVTATLGAPVFIWLLLKA). Topologically, residues 325–326 (GR) are cytoplasmic.

This sequence belongs to the binding-protein-dependent transport system permease family. FecCD subfamily. In terms of assembly, the complex is composed of two ATP-binding proteins (BtuD), two transmembrane proteins (BtuC) and a solute-binding protein (BtuF).

The protein resides in the cell inner membrane. Its function is as follows. Part of the ABC transporter complex BtuCDF involved in vitamin B12 import. Involved in the translocation of the substrate across the membrane. The sequence is that of Vitamin B12 import system permease protein BtuC (btuC) from Escherichia coli O157:H7.